Consider the following 239-residue polypeptide: Chlorate reductase subunit gamma (239 aa).

An N-terminal signal peptide occupies residues 1–27 (MKTNILVKRMAVIGLAVAAACTGAAAA). The heme b site is built by His-74 and Met-138.

In terms of assembly, heterotrimer of alpha, beta and gamma subunits. Requires heme b as cofactor.

It is found in the periplasm. Its function is as follows. May transfer electrons to the iron-sulfur centers of ClrB. This is Chlorate reductase subunit gamma (clrC) from Ideonella dechloratans.